Here is a 180-residue protein sequence, read N- to C-terminus: KxDL motif-containing protein 1 (180 aa).

2 stretches are compositionally biased toward polar residues: residues 126–144 (TTIATSEQSTESCDTSPSI) and 158–170 (QAPSDTPSVNGQI). The disordered stretch occupies residues 126–180 (TTIATSEQSTESCDTSPSIISPAMSQDFEDLSQAPSDTPSVNGQILTDEEVVHED).

This sequence belongs to the KXD1 family. As to quaternary structure, associates with the BLOC-1 complex.

It is found in the lysosome membrane. Its function is as follows. As part of a BORC-like complex may play a role in lysosomes movement and localization at the cell periphery. Associated with the cytosolic face of lysosomes, this complex may couple lysosomes to microtubule plus-end-directed kinesin motor. May also be involved in the biogenesis of lysosome-related organelles such as melanosomes. The sequence is that of KxDL motif-containing protein 1 (kxd1) from Xenopus tropicalis (Western clawed frog).